The following is a 449-amino-acid chain: Trigger factor (449 aa).

The PPIase FKBP-type domain occupies 173–258 (GDRVTVDFVG…MKKVEWPHLP (86 aa)).

The protein belongs to the FKBP-type PPIase family. Tig subfamily.

The protein resides in the cytoplasm. The catalysed reaction is [protein]-peptidylproline (omega=180) = [protein]-peptidylproline (omega=0). Functionally, involved in protein export. Acts as a chaperone by maintaining the newly synthesized protein in an open conformation. Functions as a peptidyl-prolyl cis-trans isomerase. This Burkholderia thailandensis (strain ATCC 700388 / DSM 13276 / CCUG 48851 / CIP 106301 / E264) protein is Trigger factor.